The chain runs to 426 residues: Transcription termination factor Rho (426 aa).

Positions 58 to 131 constitute a Rho RNA-BD domain; that stretch reads QSLARGYLDI…VRVEAVNGLD (74 aa). Residues 176–181, 188–193, and arginine 219 each bind ATP; these read GRGQRA and KAGKTT.

It belongs to the Rho family. Homohexamer. The homohexamer assembles into an open ring structure.

Functionally, facilitates transcription termination by a mechanism that involves Rho binding to the nascent RNA, activation of Rho's RNA-dependent ATPase activity, and release of the mRNA from the DNA template. The sequence is that of Transcription termination factor Rho from Deinococcus radiodurans (strain ATCC 13939 / DSM 20539 / JCM 16871 / CCUG 27074 / LMG 4051 / NBRC 15346 / NCIMB 9279 / VKM B-1422 / R1).